The chain runs to 131 residues: UPF0146 protein PYRAB01940 (131 aa).

It belongs to the UPF0146 family.

The polypeptide is UPF0146 protein PYRAB01940 (Pyrococcus abyssi (strain GE5 / Orsay)).